We begin with the raw amino-acid sequence, 243 residues long: 3-deoxy-manno-octulosonate cytidylyltransferase (243 aa).

It belongs to the KdsB family.

The protein resides in the cytoplasm. The enzyme catalyses 3-deoxy-alpha-D-manno-oct-2-ulosonate + CTP = CMP-3-deoxy-beta-D-manno-octulosonate + diphosphate. It participates in nucleotide-sugar biosynthesis; CMP-3-deoxy-D-manno-octulosonate biosynthesis; CMP-3-deoxy-D-manno-octulosonate from 3-deoxy-D-manno-octulosonate and CTP: step 1/1. The protein operates within bacterial outer membrane biogenesis; lipopolysaccharide biosynthesis. In terms of biological role, activates KDO (a required 8-carbon sugar) for incorporation into bacterial lipopolysaccharide in Gram-negative bacteria. In Bartonella tribocorum (strain CIP 105476 / IBS 506), this protein is 3-deoxy-manno-octulosonate cytidylyltransferase.